Reading from the N-terminus, the 476-residue chain is MNPKTYIPDTFIEMIREIMPEHLSMDEFIASCRTPLRRSIRVNTLKISVEDFLVRVSDKDWTLTPVPWCDTGFWIEREDEKSVSLGNTAEHMAGLFYIQEASSMMPVTALLKNNDALDCVLDMASAPGSKTTQIACAMQNRGVLVANELAASRIKVLHANLQRCGVYNAALTHFDGCVFGGWAPESFDTILLDAPCSGEGAIRKDGDAMANWSLSSIEDIAAIQRNLIISAFQALKTGGMMVYSTCTLNLSENQHVCHFLKETFGDAVEFEPLGDLFEGAEKSLTEDGFLHVYPQIFDSEGFFVARIRKHAAVETPKVKKRMGKFPFTIVADADKAIIAEQLQATLSITLPAESDVWVREKEVWLFPANLRPLIGEIRFQRMGVKLAEQHKKGYRWQHEAVMTLATGKEDVAIDLAPEQAKEWFMGRDIRPENLLGKGEVVVTYRDYPIGIGKWVGNRIKNGLPRELVRDTNLFDI.

S-adenosyl-L-methionine-binding positions include 124-130 (ASAPGSK), Glu-148, Asp-175, and Asp-193. Residue Cys-246 is the Nucleophile of the active site.

It belongs to the class I-like SAM-binding methyltransferase superfamily. RsmB/NOP family.

The protein localises to the cytoplasm. It catalyses the reaction cytidine(1407) in 16S rRNA + S-adenosyl-L-methionine = 5-methylcytidine(1407) in 16S rRNA + S-adenosyl-L-homocysteine + H(+). Its function is as follows. Specifically methylates the cytosine at position 1407 (m5C1407) of 16S rRNA. This is Ribosomal RNA small subunit methyltransferase F from Photobacterium profundum (strain SS9).